The following is a 480-amino-acid chain: NADH-quinone oxidoreductase subunit N (480 aa).

The next 13 membrane-spanning stretches (helical) occupy residues 10 to 30 (FISIGPLLIVLMTALIIILIE), 40 to 60 (WSSLISIGGLTLSIFAVWGGI), 80 to 100 (FFTVFFLVIGIGASLLATAFF), 117 to 137 (AVFGLILIGAAADLLTLFLGI), 166 to 186 (LMGSIVAGFLLYGIALVYGAI), 208 to 228 (VLFFSGIAMITLGLAFKAALV), 246 to 266 (TAFMAVGTKVGVFAAFVRLFF), 276 to 296 (WNQVIDTLVYATLIYANFVAL), 304 to 324 (FFAYSSISHAGFLMIPVVIGN), 330 to 350 (ALTFYLVIYAIATFGCFAVLA), 374 to 394 (LASLLSICLLTLAGIPPTAGF), 409 to 431 (YYGLVIVGLLTTILSSYYYLRII), and 452 to 472 (IVGTTSFIAIIILSFYPAPFL).

It belongs to the complex I subunit 2 family. In terms of assembly, NDH-1 is composed of 14 different subunits. Subunits NuoA, H, J, K, L, M, N constitute the membrane sector of the complex.

It localises to the cell inner membrane. The catalysed reaction is a quinone + NADH + 5 H(+)(in) = a quinol + NAD(+) + 4 H(+)(out). NDH-1 shuttles electrons from NADH, via FMN and iron-sulfur (Fe-S) centers, to quinones in the respiratory chain. The immediate electron acceptor for the enzyme in this species is believed to be ubiquinone. Couples the redox reaction to proton translocation (for every two electrons transferred, four hydrogen ions are translocated across the cytoplasmic membrane), and thus conserves the redox energy in a proton gradient. The protein is NADH-quinone oxidoreductase subunit N of Protochlamydia amoebophila (strain UWE25).